The following is a 52-amino-acid chain: MSIFKSLLSMGMNNSNSNSQSIVYNENRLNSFQSKNEIMVSISNPINPSQKK.

This is an uncharacterized protein from Dictyostelium discoideum (Social amoeba).